The chain runs to 139 residues: ATP synthase epsilon chain (139 aa).

Belongs to the ATPase epsilon chain family. F-type ATPases have 2 components, CF(1) - the catalytic core - and CF(0) - the membrane proton channel. CF(1) has five subunits: alpha(3), beta(3), gamma(1), delta(1), epsilon(1). CF(0) has three main subunits: a, b and c.

It localises to the cell inner membrane. Functionally, produces ATP from ADP in the presence of a proton gradient across the membrane. The protein is ATP synthase epsilon chain of Erwinia tasmaniensis (strain DSM 17950 / CFBP 7177 / CIP 109463 / NCPPB 4357 / Et1/99).